A 390-amino-acid polypeptide reads, in one-letter code: Putative transposase YncI (390 aa).

Belongs to the transposase 11 family.

The polypeptide is Putative transposase YncI (yncI) (Escherichia coli O157:H7).